The chain runs to 199 residues: Potassium-transporting ATPase KdpC subunit (199 aa).

A helical membrane pass occupies residues 7 to 27; it reads PAIVLLLALTLLTGLAYPLAM. A disordered region spans residues 67–86; that stretch reads HGRPSATTAADPQDSSKTVP. A compositionally biased stretch (polar residues) spans 71–84; it reads SATTAADPQDSSKT.

Belongs to the KdpC family. The system is composed of three essential subunits: KdpA, KdpB and KdpC.

It is found in the cell inner membrane. Part of the high-affinity ATP-driven potassium transport (or Kdp) system, which catalyzes the hydrolysis of ATP coupled with the electrogenic transport of potassium into the cytoplasm. This subunit acts as a catalytic chaperone that increases the ATP-binding affinity of the ATP-hydrolyzing subunit KdpB by the formation of a transient KdpB/KdpC/ATP ternary complex. This Rhodopseudomonas palustris (strain BisB18) protein is Potassium-transporting ATPase KdpC subunit.